Here is a 285-residue protein sequence, read N- to C-terminus: Acetyl-coenzyme A carboxylase carboxyl transferase subunit beta (285 aa).

Positions 29 to 285 (IMTKCPKCKK…ILKIHQEVTK (257 aa)) constitute a CoA carboxyltransferase N-terminal domain. Zn(2+) is bound by residues C33, C36, C52, and C55. A C4-type zinc finger spans residues 33–55 (CPKCKKIMYTKELAENLNVCFNC).

It belongs to the AccD/PCCB family. Acetyl-CoA carboxylase is a heterohexamer composed of biotin carboxyl carrier protein (AccB), biotin carboxylase (AccC) and two subunits each of ACCase subunit alpha (AccA) and ACCase subunit beta (AccD). The cofactor is Zn(2+).

It localises to the cytoplasm. The enzyme catalyses N(6)-carboxybiotinyl-L-lysyl-[protein] + acetyl-CoA = N(6)-biotinyl-L-lysyl-[protein] + malonyl-CoA. Its pathway is lipid metabolism; malonyl-CoA biosynthesis; malonyl-CoA from acetyl-CoA: step 1/1. Functionally, component of the acetyl coenzyme A carboxylase (ACC) complex. Biotin carboxylase (BC) catalyzes the carboxylation of biotin on its carrier protein (BCCP) and then the CO(2) group is transferred by the transcarboxylase to acetyl-CoA to form malonyl-CoA. The polypeptide is Acetyl-coenzyme A carboxylase carboxyl transferase subunit beta (Staphylococcus aureus (strain Newman)).